The primary structure comprises 586 residues: Probable zinc metalloprotease EGY3, chloroplastic (586 aa).

The N-terminal 54 residues, 1–54 (MASSSLVTSLLFSSSSSSNTATSTSSRRSFSLFSKNQYCKPRPLRRSSSRLLVR), are a transit peptide targeting the chloroplast. Disordered regions lie at residues 13-32 (SSSS…SFSL) and 58-122 (QQQQ…DWRS). Basic and acidic residues predominate over residues 61-73 (QEEKAAPAAESHH). The stretch at 103-195 (VKKSKEELEE…NTFKALDLNK (93 aa)) forms a coiled coil. The next 7 membrane-spanning stretches (helical) occupy residues 287 to 307 (LSAV…SGFF), 318 to 338 (VSDV…SEIA), 389 to 409 (ASAY…DGSL), 427 to 447 (PLLS…GNVL), 454 to 474 (VGVP…VTSL), 506 to 526 (VALG…WGLF), and 550 to 570 (YAWG…NGGG).

This sequence belongs to the peptidase M50B family.

The protein localises to the plastid. The protein resides in the chloroplast membrane. In terms of biological role, probable membrane-associated metalloprotease that may be involved in chloroplast development. The chain is Probable zinc metalloprotease EGY3, chloroplastic (EGY3) from Oryza sativa subsp. japonica (Rice).